We begin with the raw amino-acid sequence, 3021 residues long: Genome polyprotein (3021 aa).

Serine 2 is subject to N-acetylserine; by host. Positions 2–23 (STLPKPQRKTKRNTIRRPQDVK) are interaction with STAT1. Residues 2 to 58 (STLPKPQRKTKRNTIRRPQDVKFPGGGQIVGGVYVLPRRGPRLGVRATRKTSERSQP) form an interaction with EIF2AK2/PKR region. Residues 2–59 (STLPKPQRKTKRNTIRRPQDVKFPGGGQIVGGVYVLPRRGPRLGVRATRKTSERSQPR) are interaction with DDX3X. Positions 2–75 (STLPKPQRKT…PKARRSEGRS (74 aa)) are disordered. Residues 2 to 168 (STLPKPQRKT…EDGINFATGN (167 aa)) are Cytoplasmic-facing. 2 short sequence motifs (nuclear localization signal) span residues 5–13 (PKPQRKTKR) and 38–43 (PRRGPR). The span at 7 to 16 (PQRKTKRNTI) shows a compositional bias: basic residues. Serine 53 carries the post-translational modification Phosphoserine; by host. 2 consecutive short sequence motifs (nuclear localization signal) follow at residues 58–64 (PRGRRQP) and 66–71 (PKARRS). Positions 58-68 (PRGRRQPIPKA) are enriched in basic residues. At serine 99 the chain carries Phosphoserine; by host. The important for endoplasmic reticulum and mitochondrial localization stretch occupies residues 112–152 (PRRRSRNLGKVIDTLTCGFADLMGYIPLVGAPVGGVARALA). Serine 116 is subject to Phosphoserine; by host PKA. Residues 122 to 173 (VIDTLTCGFADLMGYIPLVGAPVGGVARALAHGVRALEDGINFATGNLPGCS) are interaction with APOA2. The tract at residues 164-167 (FATG) is important for lipid droplets localization. The helical transmembrane segment at 169–189 (LPGCSFSIFLLALFSCLIHPA) threads the bilayer. The propeptide at 178 to 191 (LLALFSCLIHPAAS) is ER anchor for the core protein, removed in mature form by host signal peptidase. At 190-358 (ASLEWRNTSG…AGAHWGILAG (169 aa)) the chain is on the lumenal side. N-linked (GlcNAc...) asparagine; by host glycosylation is found at asparagine 196, asparagine 209, and asparagine 234. The interval 265–296 (LVGAATMCSALYVGDMCGAVFLVGQAFTFRPR) is important for fusion. N-linked (GlcNAc...) asparagine; by host glycosylation is present at asparagine 305. The helical transmembrane segment at 359–379 (LAYYSMQGNWAKVAIIMVMFS) threads the bilayer. Residues 380-731 (GVDAHTYTTG…WEFVILVFLL (352 aa)) are Lumenal-facing. Residues 385 to 412 (TYTTGGTASRHTQAFAGLFDIGPQQKLQ) form an HVR1 region. 3 N-linked (GlcNAc...) (high mannose) asparagine; by host glycosylation sites follow: asparagine 417, asparagine 423, and asparagine 430. 4 disulfide bridges follow: cysteine 429-cysteine 553, cysteine 452-cysteine 459, cysteine 487-cysteine 495, and cysteine 504-cysteine 509. N-linked (GlcNAc...) asparagine; by host glycosylation is present at asparagine 448. An HVR2 region spans residues 474-479 (DANITG). An N-linked (GlcNAc...) asparagine; by host glycan is attached at asparagine 476. Residues 481 to 494 (SDDRPYCWHYAPRP) are CD81-binding 1. Residue asparagine 533 is glycosylated (N-linked (GlcNAc...) asparagine; by host). A CD81-binding 2 region spans residues 545 to 552 (PPSGRWFG). Asparagine 557 carries N-linked (GlcNAc...) asparagine; by host glycosylation. Cysteine 565 and cysteine 570 are joined by a disulfide. A glycan (N-linked (GlcNAc...) asparagine; by host) is linked at asparagine 578. Cystine bridges form between cysteine 587/cysteine 591, cysteine 603/cysteine 626, and cysteine 613/cysteine 650. Asparagine 651 carries N-linked (GlcNAc...) (high mannose) asparagine; by host glycosylation. Cysteine 658 and cysteine 683 form a disulfide bridge. The tract at residues 666-677 (SEQHPLLHSTTE) is PKR/eIF2-alpha phosphorylation homology domain (PePHD). A helical transmembrane segment spans residues 732 to 752 (LADARVCVALWLMLMISQTEA). Residues 753 to 763 (ALENLVTLNAV) are Lumenal-facing. Residues 764 to 784 (AAAGTHGIGWYLVAFCAAWYV) form a helical membrane-spanning segment. Over 785–787 (RGK) the chain is Cytoplasmic. Residues 788-809 (LVPLVTYSLTGLWSLALLVLLL) form a helical membrane-spanning segment. Residues 810-819 (PQRAYAWSGE) lie on the Lumenal side of the membrane. Residues 820–840 (DSATLGAGVLVLFGFFTLSPW) traverse the membrane as a helical segment. The Cytoplasmic segment spans residues 841 to 844 (YKHW). Residues 845-864 (IGRLMWWNQYTICRCESALH) traverse the membrane as a helical segment. Residues 865–887 (VWVPPLLARGSRDGVILLTSLLY) lie on the Lumenal side of the membrane. Residues 888-908 (PSLIFDITKLLMAVLGPLYLI) traverse the membrane as a helical segment. Positions 905–1032 (LYLIQATITT…DYREMGWRLL (128 aa)) constitute a Peptidase C18 domain. Topologically, residues 909–1663 (QATITTTPYF…CMSADLEVTT (755 aa)) are cytoplasmic. The tract at residues 910 to 1212 (ATITTTPYFV…PVETLSTQAR (303 aa)) is protease NS2-3. A lipid anchor (S-palmitoyl cysteine; by host) is attached at cysteine 928. Residues 935–955 (IGGKYFQMIILSIGRWFNTYL) are interaction with host SCPS1. Active-site for protease NS2 activity; shared with dimeric partner residues include histidine 958, glutamate 978, and cysteine 999. A Peptidase S29 domain is found at 1033–1214 (APITAYAQQT…ETLSTQARSP (182 aa)). Catalysis depends on charge relay system; for serine protease NS3 activity residues histidine 1089 and aspartate 1113. Zn(2+) contacts are provided by cysteine 1129 and cysteine 1131. Residue serine 1171 is the Charge relay system; for serine protease NS3 activity of the active site. The Zn(2+) site is built by cysteine 1177 and histidine 1181. The Helicase ATP-binding domain occupies 1223-1375 (PAVPQSYQVG…SNIEEVALGS (153 aa)). ATP is bound at residue 1236–1243 (APTGSGKS). Residues serine 1243 and glutamate 1323 each contribute to the Mg(2+) site. The DECH box signature appears at 1322–1325 (DECH). One can recognise a Helicase C-terminal domain in the interval 1382–1544 (YGKAIPIALL…DLQPAETTVR (163 aa)). The interval 1492–1504 (QRRGRTGRGRLGT) is RNA-binding. A helical transmembrane segment spans residues 1664 to 1684 (STWVLLGGVLAALAAYCLSVG). The NS3-binding stretch occupies residues 1685–1696 (CVVIVGHIELEG). The Cytoplasmic portion of the chain corresponds to 1685 to 1811 (CVVIVGHIEL…SVTSPLTTNQ (127 aa)). A helical transmembrane segment spans residues 1812-1830 (TMFFNILGGWVATHLAGPQ). Residues 1831–1834 (SSSA) are Lumenal-facing. A helical transmembrane segment spans residues 1835–1855 (FVVSGLAGAAIGGIGLGRVLL). Position 1856 (aspartate 1856) is a topological domain, cytoplasmic. The chain crosses the membrane as a helical span at residues 1857-1877 (ILAGYGAGVSGALVAFKIMGG). The Lumenal portion of the chain corresponds to 1878–1887 (ECPTAEDMVN). The helical transmembrane segment at 1888–1908 (LLPAILSPGALVVGVICAAIL) threads the bilayer. The Cytoplasmic portion of the chain corresponds to 1909–1978 (RRHVGPGEGA…WINEDYPSPC (70 aa)). Cysteine 1978 carries S-palmitoyl cysteine; by host lipidation. An intramembrane segment occupies 1979 to 2008 (SDDWLRTIWDWVCSVLADFKAWLSAKIMPA). At 2009 to 3000 (LPGLPFISCQ…YHSVSRARTR (992 aa)) the chain is on the cytoplasmic side. Zn(2+) contacts are provided by cysteine 2017, cysteine 2035, cysteine 2037, and cysteine 2058. The segment at 2126–2214 (EFFTEVDGVR…ASSSASQLSA (89 aa)) is FKBP8-binding. Residues 2126–2338 (EFFTEVDGVR…PVPPPRRKRT (213 aa)) are transcriptional activation. An interaction with non-structural protein 4A region spans residues 2141–2145 (PPCKP). A disordered region spans residues 2193–2215 (ARRLARGSPPSEASSSASQLSAP). The interaction with host SKP2 stretch occupies residues 2195–2448 (RLARGSPPSE…ALITPCSAEE (254 aa)). Phosphoserine; by host occurs at positions 2200, 2203, 2207, 2210, 2213, and 2216. A compositionally biased stretch (low complexity) spans 2200 to 2215 (SPPSEASSSASQLSAP). Positions 2216–2255 (SLKATCQTHRPHPDAELVDANLLWRQEMGSNITRVESETK) are ISDR. Residues 2216–2281 (SLKATCQTHR…VEPSVAAECF (66 aa)) form an interaction with EIF2AK2/PKR region. The segment at 2255–2312 (KVVVLDSFEPLRAETDDVEPSVAAECFKKPPKYPPALPIWARPDYNPPLLDRWKAPDY) is NS4B-binding. The tract at residues 2305 to 2387 (DRWKAPDYVP…STTSKVPPSP (83 aa)) is V3. An SH3-binding motif is present at residues 2328–2331 (PPVP). The short motif at 2333-2341 (PRRKRTIQL) is the Nuclear localization signal element. Residue lysine 2356 forms a Glycyl lysine isopeptide (Lys-Gly) (interchain with G-Cter in ubiquitin) linkage. The tract at residues 2356–2417 (KSFPSSKPQE…DPDLSCDSWS (62 aa)) is disordered. 2 stretches are compositionally biased toward low complexity: residues 2359-2381 (PSSK…STTS) and 2388-2401 (GGES…SMPP). 2 positions are modified to phosphoserine; by host: serine 2459 and serine 2472. The 119-residue stretch at 2644 to 2762 (PLGFSYDTRC…VAESDGVDED (119 aa)) folds into the RdRp catalytic domain. Mg(2+)-binding residues include aspartate 2650, aspartate 2748, and aspartate 2749. The helical transmembrane segment at 3001 to 3021 (HLLLCLLLLTVGVGIFLLPAR) threads the bilayer.

The protein belongs to the hepacivirus polyprotein family. As to quaternary structure, homooligomer. Interacts with E1 (via C-terminus). Interacts with the non-structural protein 5A. Interacts (via N-terminus) with host STAT1 (via SH2 domain); this interaction results in decreased STAT1 phosphorylation and ubiquitin-mediated proteasome-dependent STAT1 degradation, leading to decreased IFN-stimulated gene transcription. Interacts with host STAT3; this interaction constitutively activates STAT3. Interacts with host LTBR receptor. Interacts with host TNFRSF1A receptor and possibly induces apoptosis. Interacts with host HNRPK. Interacts with host YWHAE. Interacts with host UBE3A/E6AP. Interacts with host DDX3X. Interacts with host APOA2. Interacts with host RXRA protein. Interacts with host SP110 isoform 3/Sp110b; this interaction sequesters the transcriptional corepressor SP110 away from the nucleus. Interacts with host CREB3 nuclear transcription protein; this interaction triggers cell transformation. Interacts with host ACY3. Interacts with host C1QR1. Interacts with host RBM24; this interaction, which enhances the interaction of the mature core protein with 5'-UTR, may inhibit viral translation and favor replication. Interacts with host EIF2AK2/PKR; this interaction induces the autophosphorylation of EIF2AK2. Part of the viral assembly initiation complex composed of NS2, E1, E2, NS3, NS4A, NS5A and the mature core protein. In terms of assembly, forms a heterodimer with envelope glycoprotein E2. Interacts with mature core protein. Interacts with protease NS2. The heterodimer E1/E2 interacts with host CLDN1; this interaction plays a role in viral entry into host cell. Interacts with host SPSB2 (via C-terminus). Part of the viral assembly initiation complex composed of NS2, E1, E2, NS3, NS4A, NS5A and the mature core protein. Interacts with host NEURL3; this interaction prevents E1 binding to glycoprotein E2. Forms a heterodimer with envelope glycoprotein E1. Interacts with host CD81 and SCARB1 receptors; these interactions play a role in viral entry into host cell. Interacts with host EIF2AK2/PKR; this interaction inhibits EIF2AK2 and probably allows the virus to evade the innate immune response. Interacts with host CD209/DC-SIGN and CLEC4M/DC-SIGNR. Interact with host SPCS1; this interaction is essential for viral particle assembly. Interacts with protease NS2. The heterodimer E1/E2 interacts with host CLDN1; this interaction plays a role in viral entry into host cell. Part of the viral assembly initiation complex composed of NS2, E1, E2, NS3, NS4A, NS5A and the mature core protein. Interacts with host SLC3A2/4F2hc; the interaction may facilitate viral entry into host cell. Interacts with human PLSCR1. As to quaternary structure, homohexamer. Homoheptamer. Interacts with protease NS2. In terms of assembly, homodimer. Interacts with host SPCS1; this interaction is essential for viral particle assembly. Interacts with envelope glycoprotein E1. Interacts with envelope glycoprotein E2. Interacts with viroporin p7. Interacts with serine protease/helicase NS3. Part of the replication complex composed of NS2, NS3, NS4A, NS4B, NS5A and the RNA-directed RNA polymerase embedded in an ER-derived membranous web. Part of the viral assembly initiation complex composed of NS2, E1, E2, NS3, NS4A, NS5A and the mature core protein. Interacts with protease NS2. Interacts with non-structural protein 4A; this interaction stabilizes the folding of NS3 serine protease. NS3-NS4A interaction is essential for NS3 activation and allows membrane anchorage of the latter. NS3/NS4A complex also prevents phosphorylation of host IRF3, thus preventing the establishment of dsRNA induced antiviral state. Interacts with host MAVS; this interaction leads to the cleavage and inhibition of host MAVS. Interacts with host TICAM1; this interaction leads to the cleavage and inhibition of host TICAM1. Interacts with host TANK-binding kinase/TBK1; this interaction results in the inhibition of the association between TBK1 and IRF3, which leads to the inhibition of IRF3 activation. Interacts with host RBM24. Part of the replication complex composed of NS2, NS3, NS4A, NS4B, NS5A and the RNA-directed RNA polymerase embedded in an ER-derived membranous web. Part of the viral assembly initiation complex composed of NS2, E1, E2, NS3, NS4A, NS5A and the mature core protein. As to quaternary structure, interacts with NS3 serine protease; this interaction stabilizes the folding of NS3 serine protease. NS3-NS4A interaction is essential for NS3 activation and allows membrane anchorage of the latter. Interacts with non-structural protein 5A (via N-terminus). Part of the replication complex composed of NS2, NS3, NS4A, NS4B, NS5A and the RNA-directed RNA polymerase embedded in an ER-derived membranous web. Part of the viral assembly initiation complex composed of NS2, E1, E2, NS3, NS4A, NS5A and the mature core protein. In terms of assembly, homomultimer. Interacts with non-structural protein NS5A. Interacts with host PLA2G4C; this interaction likely initiates the recruitment of replication complexes to lipid droplets. Interacts with host STING; this interaction disrupts the interaction between STING and TBK1 thereby suppressing the interferon signaling. Part of the replication complex composed of NS2, NS3, NS4A, NS4B, NS5A and the RNA-directed RNA polymerase embedded in an ER-derived membranous web. Monomer. Homodimer; dimerization is required for RNA-binding. Interacts with the mature core protein. Interacts (via N-terminus) with non-structural protein 4A. Interacts with non-structural protein 4B. Interacts (via region D2) with RNA-directed RNA polymerase. Part of the viral assembly initiation complex composed of NS2, E1, E2, NS3, NS4A, NS5A and the mature core protein. Part of the replication complex composed of NS2, NS3, NS4A, NS4B, NS5A and the RNA-directed RNA polymerase embedded in an ER-derived membranous web. Interacts with host GRB2. Interacts with host BIN1. Interacts with host PIK3R1. Interacts with host SRCAP. Interacts with host FKBP8. Interacts (via C-terminus) with host VAPB (via MSP domain). Interacts with host EIF2AK2/PKR; this interaction leads to disruption of EIF2AK2 dimerization by NS5A and probably allows the virus to evade the innate immune response. Interacts (via N-terminus) with host PACSIN2 (via N-terminus); this interaction attenuates protein kinase C alpha-mediated phosphorylation of PACSIN2 by disrupting the interaction between PACSIN2 and PRKCA. Interacts (via N-terminus) with host SRC kinase (via SH2 domain). Interacts with most Src-family kinases. Interacts with host IFI27 and SKP2; promotes the ubiquitin-mediated proteasomal degradation of NS5A. Interacts with host GPS2. Interacts with host TNFRSF21; this interaction allows the modulation by the virus of JNK, p38 MAPK, STAT3, and Akt signaling pathways in a DR6-dependent manner. Interacts (via N-terminus) with host CIDEB (via N-terminus); this interaction seems to regulate the association of HCV particles with APOE. Interacts with host CHKA/Choline Kinase-alpha; CHKA bridges host PI4KA and NS5A and potentiates NS5A-stimulated PI4KA activity, which then facilitates the targeting of the ternary complex to the ER for viral replication. Interacts with host SPSB2 (via C-terminus); this interaction targets NS5A for ubiquitination and degradation. Interacts with host RAB18; this interaction may promote the association of NS5A and other replicase components with lipid droplets. Interacts (via region D2) with host PPIA/CYPA; the interaction stimulates RNA-binding ability of NS5A and is dependent on the peptidyl-prolyl cis-trans isomerase activity of PPIA/CYPA. Interacts with host TRIM14; this interaction induces the degradation of NS5A. As to quaternary structure, homooligomer. Interacts with non-structural protein 5A. Interacts with host VAPB. Interacts with host PRK2/PKN2. Interacts with host HNRNPA1 and SEPT6; these interactions facilitate viral replication. Part of the replication complex composed of NS2, NS3, NS4A, NS4B, NS5A and the RNA-directed RNA polymerase. Zn(2+) is required as a cofactor. Mg(2+) serves as cofactor. Specific enzymatic cleavages in vivo yield mature proteins. The structural proteins, core, E1, E2 and p7 are produced by proteolytic processing by host signal peptidases. The core protein precursor is synthesized as a 23 kDa, which is retained in the ER membrane through the hydrophobic signal peptide. Cleavage by the signal peptidase releases the 21 kDa mature core protein. The cleavage of the core protein precursor occurs between aminoacids 176 and 188 but the exact cleavage site is not known. Some degraded forms of the core protein appear as well during the course of infection. The other proteins (p7, NS2, NS3, NS4A, NS4B, NS5A and NS5B) are cleaved by the viral proteases. Autoprocessing between NS2 and NS3 is mediated by the NS2 cysteine protease catalytic domain and regulated by the NS3 N-terminal domain. Post-translationally, phosphorylated by host PKC and PKA. In terms of processing, ubiquitinated; mediated by UBE3A and leading to core protein subsequent proteasomal degradation. Highly N-glycosylated. Post-translationally, palmitoylation is required for NS2/3 autoprocessing and E2 recruitment to membranes. In terms of processing, palmitoylated. This modification may play a role in its polymerization or in protein-protein interactions. Phosphorylated on serines in a basal form termed p56. p58 is a hyperphosphorylated form of p56. p56 and p58 coexist in the cell in roughly equivalent amounts. Hyperphosphorylation is dependent on the presence of NS4A. Host CSNK1A1/CKI-alpha or RPS6KB1 kinases may be responsible for NS5A phosphorylation. Post-translationally, tyrosine phosphorylation is essential for the interaction with host SRC. In terms of processing, ubiquitinated. Ubiquitination, most probably at Lys-2350, mediated by host IFI27 and SKP2 leads to proteasomal degradation, restricting viral infection. Ubiquitination by host TRIM22 leads to interruption of viral replication. The N-terminus is phosphorylated by host PRK2/PKN2.

The protein resides in the host endoplasmic reticulum membrane. It localises to the host mitochondrion membrane. It is found in the virion. The protein localises to the host cytoplasm. Its subcellular location is the host nucleus. The protein resides in the host lipid droplet. It localises to the virion membrane. It is found in the host mitochondrion. The protein localises to the host cell membrane. Its subcellular location is the host perinuclear region. The catalysed reaction is Hydrolysis of four peptide bonds in the viral precursor polyprotein, commonly with Asp or Glu in the P6 position, Cys or Thr in P1 and Ser or Ala in P1'.. It carries out the reaction a ribonucleoside 5'-triphosphate + H2O = a ribonucleoside 5'-diphosphate + phosphate + H(+). It catalyses the reaction ATP + H2O = ADP + phosphate + H(+). The enzyme catalyses RNA(n) + a ribonucleoside 5'-triphosphate = RNA(n+1) + diphosphate. Inhibited by the antiviral drug hexamethylene amiloride. Inhibition by amantadine appears to be genotype-dependent. Also inhibited by long-alkyl-chain iminosugar derivatives. With respect to regulation, activity is up-regulated by PRK2/PKN2-mediated phosphorylation. Functionally, packages viral RNA to form a viral nucleocapsid, and promotes virion budding. Participates in the viral particle production as a result of its interaction with the non-structural protein 5A. Binds RNA and may function as a RNA chaperone to induce the RNA structural rearrangements taking place during virus replication. Modulates viral translation initiation by interacting with viral IRES and 40S ribosomal subunit. Affects various cell signaling pathways, host immunity and lipid metabolism. Prevents the establishment of cellular antiviral state by blocking the interferon-alpha/beta (IFN-alpha/beta) and IFN-gamma signaling pathways and by blocking the formation of phosphorylated STAT1 and promoting ubiquitin-mediated proteasome-dependent degradation of STAT1. Activates STAT3 leading to cellular transformation. Regulates the activity of cellular genes, including c-myc and c-fos. May repress the promoter of p53, and sequester CREB3 and SP110 isoform 3/Sp110b in the cytoplasm. Represses cell cycle negative regulating factor CDKN1A, thereby interrupting an important check point of normal cell cycle regulation. Targets transcription factors involved in the regulation of inflammatory responses and in the immune response: suppresses TNF-induced NF-kappa-B activation, and activates AP-1. Binds to dendritic cells (DCs) via C1QR1, resulting in down-regulation of T-lymphocytes proliferation. Alters lipid metabolism by interacting with hepatocellular proteins involved in lipid accumulation and storage. Induces up-regulation of FAS promoter activity, and thereby contributes to the increased triglyceride accumulation in hepatocytes (steatosis). Its function is as follows. Forms a heterodimer with envelope glycoprotein E2, which mediates virus attachment to the host cell, virion internalization through clathrin-dependent endocytosis and fusion with host membrane. Fusion with the host cell is most likely mediated by both E1 and E2, through conformational rearrangements of the heterodimer required for fusion rather than a classical class II fusion mechanism. E1/E2 heterodimer binds host apolipoproteins such as APOB and ApoE thereby forming a lipo-viro-particle (LVP). APOE associated to the LVP allows the initial virus attachment to cell surface receptors such as the heparan sulfate proteoglycans (HSPGs), syndecan-1 (SDC1), syndecan-1 (SDC2), the low-density lipoprotein receptor (LDLR) and scavenger receptor class B type I (SCARB1). The cholesterol transfer activity of SCARB1 allows E2 exposure and binding of E2 to SCARB1 and the tetraspanin CD81. E1/E2 heterodimer binding on CD81 activates the epithelial growth factor receptor (EGFR) signaling pathway. Diffusion of the complex E1-E2-EGFR-SCARB1-CD81 to the cell lateral membrane allows further interaction with Claudin 1 (CLDN1) and occludin (OCLN) to finally trigger HCV entry. In terms of biological role, forms a heterodimer with envelope glycoprotein E1, which mediates virus attachment to the host cell, virion internalization through clathrin-dependent endocytosis and fusion with host membrane. Fusion with the host cell is most likely mediated by both E1 and E2, through conformational rearrangements of the heterodimer required for fusion rather than a classical class II fusion mechanism. The interaction between envelope glycoprotein E2 and host apolipoprotein E/APOE allows the proper assembly, maturation and infectivity of the viral particles. This interaction is probably promoted via the up-regulation of cellular autophagy by the virus. E1/E2 heterodimer binds host apolipoproteins such as APOB and APOE thereby forming a lipo-viro-particle (LVP). APOE associated to the LVP allows the initial virus attachment to cell surface receptors such as the heparan sulfate proteoglycans (HSPGs), syndecan-1 (SDC1), syndecan-1 (SDC2), the low-density lipoprotein receptor (LDLR) and scavenger receptor class B type I (SCARB1). The cholesterol transfer activity of SCARB1 allows E2 exposure and binding of E2 to SCARB1 and the tetraspanin CD81. E1/E2 heterodimer binding on CD81 activates the epithelial growth factor receptor (EGFR) signaling pathway. Diffusion of the complex E1-E2-EGFR-SCARB1-CD81 to the cell lateral membrane allows further interaction with Claudin 1 (CLDN1) and occludin (OCLN) to finally trigger HCV entry. Inhibits host EIF2AK2/PKR activation, preventing the establishment of an antiviral state. Viral ligand for CD209/DC-SIGN and CLEC4M/DC-SIGNR, which are respectively found on dendritic cells (DCs), and on liver sinusoidal endothelial cells and macrophage-like cells of lymph node sinuses. These interactions allow the capture of circulating HCV particles by these cells and subsequent facilitated transmission to permissive cells such as hepatocytes and lymphocyte subpopulations. The interaction between E2 and host amino acid transporter complex formed by SLC3A2 and SLC7A5/LAT1 may facilitate viral entry into host cell. Ion channel protein that acts as a viroporin and plays an essential role in the assembly, envelopment and secretion of viral particles. Regulates the host cell secretory pathway, which induces the intracellular retention of viral glycoproteins and favors assembly of viral particles. Creates a pore in acidic organelles and releases Ca(2+) and H(+) in the cytoplasm of infected cells, leading to a productive viral infection. High levels of cytoplasmic Ca(2+) may trigger membrane trafficking and transport of viral ER-associated proteins to viroplasms, sites of viral genome replication. This ionic imbalance induces the assembly of the inflammasome complex, which triggers the maturation of pro-IL-1beta into IL-1beta through the action of caspase-1. Targets also host mitochondria and induces mitochondrial depolarization. In addition of its role as a viroporin, acts as a lipid raft adhesion factor. Functionally, cysteine protease required for the proteolytic auto-cleavage between the non-structural proteins NS2 and NS3. The N-terminus of NS3 is required for the function of NS2 protease (active region NS2-3). Promotes the initiation of viral particle assembly by mediating the interaction between structural and non-structural proteins. Its function is as follows. Displays three enzymatic activities: serine protease with a chymotrypsin-like fold, NTPase and RNA helicase. NS3 serine protease, in association with NS4A, is responsible for the cleavages of NS3-NS4A, NS4A-NS4B, NS4B-NS5A and NS5A-NS5B. The NS3/NS4A complex prevents phosphorylation of host IRF3, thus preventing the establishment of dsRNA induced antiviral state. The NS3/NS4A complex induces host amino acid transporter component SLC3A2, thus contributing to HCV propagation. NS3 RNA helicase binds to RNA and unwinds both dsDNA and dsRNA in the 3' to 5' direction, and likely resolves RNA complicated stable secondary structures in the template strand. Binds a single ATP and catalyzes the unzipping of a single base pair of dsRNA. Inhibits host antiviral proteins TBK1 and IRF3 thereby preventing the establishment of an antiviral state. Cleaves host MAVS/CARDIF thereby preventing the establishment of an antiviral state. Cleaves host TICAM1/TRIF, thereby disrupting TLR3 signaling and preventing the establishment of an antiviral state. In terms of biological role, peptide cofactor which forms a non-covalent complex with the N-terminal of NS3 serine protease. The NS3/NS4A complex prevents phosphorylation of host IRF3, thus preventing the establishment of dsRNA induced antiviral state. The NS3/NS4A complex induces host amino acid transporter component SLC3A2, thus contributing to HCV propagation. Induces a specific membrane alteration that serves as a scaffold for the virus replication complex. This membrane alteration gives rise to the so-called ER-derived membranous web that contains the replication complex. NS4B self-interaction contributes to its function in membranous web formation. Promotes host TRIF protein degradation in a CASP8-dependent manner thereby inhibiting host TLR3-mediated interferon signaling. Disrupts the interaction between STING and TBK1 contributing to the inhibition of interferon signaling. Functionally, phosphorylated protein that is indispensable for viral replication and assembly. Both hypo- and hyperphosphorylated states are required for the viral life cycle. The hyperphosphorylated form of NS5A is an inhibitor of viral replication. Involved in RNA-binding and especially in binding to the viral genome. Zinc is essential for RNA-binding. Participates in the viral particle production as a result of its interaction with the mature viral core protein. Its interaction with host VAPB may target the viral replication complex to vesicles. Down-regulates viral IRES translation initiation. Mediates interferon resistance, presumably by interacting with and inhibiting host EIF2AK2/PKR. Prevents BIN1-induced apoptosis. Acts as a transcriptional activator of some host genes important for viral replication when localized in the nucleus. Via the interaction with host PACSIN2, modulates lipid droplet formation in order to promote virion assembly. Modulates TNFRSF21/DR6 signaling pathway for viral propagation. Its function is as follows. RNA-dependent RNA polymerase that performs primer-template recognition and RNA synthesis during viral replication. Initiates RNA transcription/replication at a flavin adenine dinucleotide (FAD), resulting in a 5'- FAD cap on viral RNAs. In this way, recognition of viral 5' RNA by host pattern recognition receptors can be bypassed, thereby evading activation of antiviral pathways. The sequence is that of Genome polyprotein from Homo sapiens (Human).